The chain runs to 337 residues: ERI1 exoribonuclease 3 (337 aa).

The region spanning 146-320 is the Exonuclease domain; it reads FLVLDFEATC…DDCKNIANIM (175 aa). Residues Asp-150, Glu-152, and Asp-249 each contribute to the Mg(2+) site. Glu-152 functions as the Proton acceptor in the catalytic mechanism. AMP is bound at residue Glu-152. The Proton acceptor role is filled by His-307. His-307 is an AMP binding site. A Mg(2+)-binding site is contributed by Asp-312.

As to quaternary structure, interacts with PRNP. The cofactor is Mg(2+). In terms of tissue distribution, highly expressed in the brain, heart, thyroid and testis. Expressed at low levels in the muscle cells, liver, pancreas and kidney.

This chain is ERI1 exoribonuclease 3 (Eri3), found in Mus musculus (Mouse).